We begin with the raw amino-acid sequence, 275 residues long: Catechol 1,2-dioxygenase 2 (275 aa).

Positions 158, 192, 216, and 218 each coordinate Fe cation.

It belongs to the intradiol ring-cleavage dioxygenase family. Homodimer. The cofactor is Fe(3+).

The catalysed reaction is catechol + O2 = cis,cis-muconate + 2 H(+). It functions in the pathway aromatic compound metabolism; beta-ketoadipate pathway; 5-oxo-4,5-dihydro-2-furylacetate from catechol: step 1/3. Its function is as follows. Can cleave 4-methyl-, 4-chloro-, and 3-methoxycatechol at lower rates than catechol, but has no activity with 4-nitrocatechol or protocatechuic acid. In Acinetobacter lwoffii, this protein is Catechol 1,2-dioxygenase 2 (catA2).